We begin with the raw amino-acid sequence, 326 residues long: Undecaprenyl-phosphate 4-deoxy-4-formamido-L-arabinose transferase (326 aa).

Helical transmembrane passes span 234–254 (LLSI…ILLI) and 269–289 (VFTL…GMGL).

It belongs to the glycosyltransferase 2 family.

The protein resides in the cell inner membrane. The enzyme catalyses UDP-4-deoxy-4-formamido-beta-L-arabinose + di-trans,octa-cis-undecaprenyl phosphate = 4-deoxy-4-formamido-alpha-L-arabinopyranosyl di-trans,octa-cis-undecaprenyl phosphate + UDP. The protein operates within glycolipid biosynthesis; 4-amino-4-deoxy-alpha-L-arabinose undecaprenyl phosphate biosynthesis; 4-amino-4-deoxy-alpha-L-arabinose undecaprenyl phosphate from UDP-4-deoxy-4-formamido-beta-L-arabinose and undecaprenyl phosphate: step 1/2. It functions in the pathway bacterial outer membrane biogenesis; lipopolysaccharide biosynthesis. Functionally, catalyzes the transfer of 4-deoxy-4-formamido-L-arabinose from UDP to undecaprenyl phosphate. The modified arabinose is attached to lipid A and is required for resistance to polymyxin and cationic antimicrobial peptides. This chain is Undecaprenyl-phosphate 4-deoxy-4-formamido-L-arabinose transferase, found in Aeromonas hydrophila subsp. hydrophila (strain ATCC 7966 / DSM 30187 / BCRC 13018 / CCUG 14551 / JCM 1027 / KCTC 2358 / NCIMB 9240 / NCTC 8049).